Here is a 134-residue protein sequence, read N- to C-terminus: Profilin-1 (134 aa).

A disulfide bond links C13 and C118. The short motif at A84–T100 is the Involved in PIP2 interaction element. A Phosphothreonine modification is found at T114.

This sequence belongs to the profilin family. Occurs in many kinds of cells as a complex with monomeric actin in a 1:1 ratio. Phosphorylated by MAP kinases.

Its subcellular location is the cytoplasm. It is found in the cytoskeleton. In terms of biological role, binds to actin and affects the structure of the cytoskeleton. At high concentrations, profilin prevents the polymerization of actin, whereas it enhances it at low concentrations. This chain is Profilin-1, found in Olea europaea (Common olive).